Consider the following 831-residue polypeptide: Prickle-like protein 1 (831 aa).

One can recognise a PET domain in the interval 14–122; the sequence is FGCQRSSTSD…TIKLLSRAVM (109 aa). 3 LIM zinc-binding domains span residues 124-189, 189-249, and 249-313; these read AVCE…LLKP, PRCS…LYAE, and EYCE…EDVH. Positions 313–342 are disordered; it reads HASDSSDSAFQSARSRDSRRSVRMGKSSRS. Phosphoserine is present on residues S315, S591, and S594. Disordered stretches follow at residues 663-688 and 763-831; these read FEER…NALN and CSSS…CIIS. The span at 669–680 shows a compositional bias: basic residues; it reads RSHHHRRRRSRK. Residue S683 is modified to Phosphoserine. Residues 815–831 show a composition bias toward basic residues; it reads TKSKKKKGHKGKNCIIS. The residue at position 828 (C828) is a Cysteine methyl ester. C828 carries the S-farnesyl cysteine lipid modification. Residues 829–831 constitute a propeptide, removed in mature form; sequence IIS.

Belongs to the prickle / espinas / testin family. In terms of assembly, interacts with REST. In terms of tissue distribution, expressed at highest levels in placenta and at lower levels in lung, liver, kidney and pancreas. Expressed in thalamus, hippocampus, cerebral cortex, and cerebellum (in neurons rather than glia).

Its subcellular location is the nucleus membrane. It localises to the cytoplasm. The protein localises to the cytosol. Functionally, involved in the planar cell polarity pathway that controls convergent extension during gastrulation and neural tube closure. Convergent extension is a complex morphogenetic process during which cells elongate, move mediolaterally, and intercalate between neighboring cells, leading to convergence toward the mediolateral axis and extension along the anteroposterior axis. Necessary for nuclear localization of REST. May serve as nuclear receptor. This Homo sapiens (Human) protein is Prickle-like protein 1 (PRICKLE1).